The primary structure comprises 229 residues: Large ribosomal subunit protein uL1 (229 aa).

The protein belongs to the universal ribosomal protein uL1 family. As to quaternary structure, part of the 50S ribosomal subunit.

Functionally, binds directly to 23S rRNA. The L1 stalk is quite mobile in the ribosome, and is involved in E site tRNA release. Protein L1 is also a translational repressor protein, it controls the translation of the L11 operon by binding to its mRNA. This is Large ribosomal subunit protein uL1 from Rhodopseudomonas palustris (strain BisB5).